The primary structure comprises 26 residues: Melittin (26 aa).

Glycine 1 is modified (N-formylglycine; partial). At glutamine 26 the chain carries Glutamine amide.

Belongs to the melittin family. Monomer (in solution and for integration into membranes), homotetramer (in solution and potentially as a toroidal pore in membranes), and potenially homomultimer (as a toroidal pore in membranes). As to expression, expressed by the venom gland.

The protein resides in the secreted. It localises to the target cell membrane. Functionally, main toxin of bee venom with strong hemolytic activity and antimicrobial activity. It has enhancing effects on bee venom phospholipase A2 activity. This amphipathic toxin binds to negatively charged membrane surface and forms pore by inserting into lipid bilayers inducing the leakage of ions and molecules and the enhancement of permeability that ultimately leads to cell lysis. It acts as a voltage-gated pore with higher selectivity for anions over cations. The ion conductance has been shown to be voltage-dependent. Self-association of melittin in membranes is promoted by high ionic strength, but not by the presence of negatively charged lipids. In vivo, intradermal injection into healthy human volunteers produce sharp pain sensation and an inflammatory response. It produces pain by activating primary nociceptor cells directly and indirectly due to its ability to activate plasma membrane phospholipase A2 and its pore-forming activity. The protein is Melittin (MELT) of Apis florea (Dwarf honeybee).